The chain runs to 509 residues: Dihydrolipoyl dehydrogenase, mitochondrial (509 aa).

Residues 1-35 (MQSWSRVYCSLAKRGHFNRISHGLQGLSAVPLRTY) constitute a mitochondrion transit peptide. Position 66 is an N6-acetyllysine; alternate (Lys-66). Lys-66 is subject to N6-succinyllysine; alternate. Residues 71–80 (EKNETLGGTC) and Lys-89 contribute to the FAD site. A disulfide bridge links Cys-80 with Cys-85. 4 positions are modified to N6-acetyllysine; alternate: Lys-104, Lys-122, Lys-132, and Lys-143. 4 positions are modified to N6-succinyllysine; alternate: Lys-104, Lys-122, Lys-132, and Lys-143. Gly-154 contributes to the FAD binding site. Lys-159 and Lys-166 each carry N6-succinyllysine. 183 to 185 (TGS) provides a ligand contact to FAD. NAD(+) is bound by residues 220 to 227 (GAGVIGVE) and Glu-243. N6-succinyllysine is present on residues Lys-273 and Lys-277. Residue Val-278 participates in NAD(+) binding. A phosphoserine mark is found at Ser-285 and Ser-297. Gly-314 is a binding site for NAD(+). N6-acetyllysine is present on Lys-346. FAD is bound by residues Asp-355 and 361–364 (MLAH). N6-acetyllysine; alternate is present on Lys-410. N6-succinyllysine; alternate is present on Lys-410. N6-acetyllysine is present on residues Lys-417 and Lys-420. The residue at position 430 (Lys-430) is an N6-succinyllysine. The active-site Proton acceptor is the His-487. A Phosphoserine modification is found at Ser-502. N6-acetyllysine; alternate is present on Lys-505. At Lys-505 the chain carries N6-succinyllysine; alternate.

Belongs to the class-I pyridine nucleotide-disulfide oxidoreductase family. As to quaternary structure, homodimer. Part of the multimeric pyruvate dehydrogenase complex that contains multiple copies of pyruvate dehydrogenase (subunits PDHA (PDHA1 or PDHA2) and PDHB, E1), dihydrolipoamide acetyltransferase (DLAT, E2) and lipoamide dehydrogenase (DLD, E3). These subunits are bound to an inner core composed of about 48 DLAT and 12 PDHX molecules (by non covalent bonds). The 2-oxoglutarate dehydrogenase complex is composed of OGDH (2-oxoglutarate dehydrogenase; E1), DLST (dihydrolipoamide succinyltransferase; E2), DLD (dihydrolipoamide dehydrogenase; E3) and the assembly factor KGD4. It contains multiple copies of the three enzymatic components (E1, E2 and E3). In the nucleus, the 2-oxoglutarate dehydrogenase complex associates with KAT2A. Interacts with PDHX. The cofactor is FAD. In terms of processing, tyrosine phosphorylated.

The protein resides in the mitochondrion matrix. It localises to the nucleus. It is found in the cell projection. The protein localises to the cilium. Its subcellular location is the flagellum. The protein resides in the cytoplasmic vesicle. It localises to the secretory vesicle. It is found in the acrosome. The enzyme catalyses N(6)-[(R)-dihydrolipoyl]-L-lysyl-[protein] + NAD(+) = N(6)-[(R)-lipoyl]-L-lysyl-[protein] + NADH + H(+). Functionally, lipoamide dehydrogenase is a component of the glycine cleavage system as well as an E3 component of three alpha-ketoacid dehydrogenase complexes (pyruvate-, alpha-ketoglutarate-, and branched-chain amino acid-dehydrogenase complex). The 2-oxoglutarate dehydrogenase complex is mainly active in the mitochondrion. A fraction of the 2-oxoglutarate dehydrogenase complex also localizes in the nucleus and is required for lysine succinylation of histones: associates with KAT2A on chromatin and provides succinyl-CoA to histone succinyltransferase KAT2A. In monomeric form may have additional moonlighting function as serine protease. Involved in the hyperactivation of spermatazoa during capacitation and in the spermatazoal acrosome reaction. This is Dihydrolipoyl dehydrogenase, mitochondrial (DLD) from Pongo abelii (Sumatran orangutan).